A 130-amino-acid chain; its full sequence is Glycine cleavage system H protein (130 aa).

The Lipoyl-binding domain maps to I24–R106. K65 is modified (N6-lipoyllysine).

The protein belongs to the GcvH family. In terms of assembly, the glycine cleavage system is composed of four proteins: P, T, L and H. Requires (R)-lipoate as cofactor.

The glycine cleavage system catalyzes the degradation of glycine. The H protein shuttles the methylamine group of glycine from the P protein to the T protein. This chain is Glycine cleavage system H protein, found in Pectobacterium carotovorum subsp. carotovorum (strain PC1).